Consider the following 423-residue polypeptide: Serine hydroxymethyltransferase (423 aa).

(6S)-5,6,7,8-tetrahydrofolate contacts are provided by residues L120 and 124 to 126 (GHL). Residue K229 is modified to N6-(pyridoxal phosphate)lysine. Residues E245 and 353-355 (SPF) contribute to the (6S)-5,6,7,8-tetrahydrofolate site.

The protein belongs to the SHMT family. As to quaternary structure, homodimer. Requires pyridoxal 5'-phosphate as cofactor.

The protein localises to the cytoplasm. The catalysed reaction is (6R)-5,10-methylene-5,6,7,8-tetrahydrofolate + glycine + H2O = (6S)-5,6,7,8-tetrahydrofolate + L-serine. It functions in the pathway one-carbon metabolism; tetrahydrofolate interconversion. The protein operates within amino-acid biosynthesis; glycine biosynthesis; glycine from L-serine: step 1/1. Catalyzes the reversible interconversion of serine and glycine with tetrahydrofolate (THF) serving as the one-carbon carrier. This reaction serves as the major source of one-carbon groups required for the biosynthesis of purines, thymidylate, methionine, and other important biomolecules. Also exhibits THF-independent aldolase activity toward beta-hydroxyamino acids, producing glycine and aldehydes, via a retro-aldol mechanism. In Prochlorococcus marinus (strain MIT 9312), this protein is Serine hydroxymethyltransferase.